Consider the following 319-residue polypeptide: UPF0761 membrane protein PBPRA3489 (319 aa).

6 helical membrane-spanning segments follow: residues 50-70, 107-127, 143-163, 188-208, 215-235, and 249-269; these read LVPM…FAGL, VGIG…DHAL, FSIY…SIAV, ALPV…VPNL, ALLG…GFAL, and ALAV…IVLL.

Belongs to the UPF0761 family.

It is found in the cell inner membrane. The sequence is that of UPF0761 membrane protein PBPRA3489 from Photobacterium profundum (strain SS9).